We begin with the raw amino-acid sequence, 500 residues long: Probable malate:quinone oxidoreductase (500 aa).

This sequence belongs to the MQO family. The cofactor is FAD.

The catalysed reaction is (S)-malate + a quinone = a quinol + oxaloacetate. Its pathway is carbohydrate metabolism; tricarboxylic acid cycle; oxaloacetate from (S)-malate (quinone route): step 1/1. This is Probable malate:quinone oxidoreductase from Corynebacterium glutamicum (strain R).